We begin with the raw amino-acid sequence, 264 residues long: Sec-independent protein translocase protein TatC (264 aa).

Transmembrane regions (helical) follow at residues 20–40 (VVVI…EPAE), 85–105 (FFAQ…PVAV), 131–151 (AVGL…PYIL), 175–195 (FVLQ…VMFA), 211–231 (IRYA…DGSG), and 232–252 (VTMW…MFFA).

This sequence belongs to the TatC family. In terms of assembly, forms a complex with TatA.

The protein localises to the cell membrane. Its function is as follows. Part of the twin-arginine translocation (Tat) system that transports large folded proteins containing a characteristic twin-arginine motif in their signal peptide across membranes. The protein is Sec-independent protein translocase protein TatC of Cenarchaeum symbiosum (strain A).